Reading from the N-terminus, the 522-residue chain is Cytochrome P450 714C2 (522 aa).

Over 1–11 (MELFSSQQWLA) the chain is Lumenal. Residues 12–32 (LLPPIILCILLFSYVYIILWL) form a helical; Signal-anchor for type III membrane protein membrane-spanning segment. The Cytoplasmic segment spans residues 33–522 (RPERLRQKLR…KGVPLIFREL (490 aa)). Cys-470 contacts heme.

The protein belongs to the cytochrome P450 family. It depends on heme as a cofactor.

It is found in the membrane. In terms of biological role, probably not involved in gibberellin metabolism since over-expression of CYP714C2 in a heterologous system does not induce semi-dwarfism. The polypeptide is Cytochrome P450 714C2 (CYP714C2) (Oryza sativa subsp. japonica (Rice)).